The sequence spans 454 residues: Bifunctional protein GlmU (454 aa).

The segment at 1 to 227 is pyrophosphorylase; that stretch reads MKKLSVVILA…KMEVEGANNR (227 aa). Residues 9-12, Lys-23, Gln-74, 79-80, 101-103, Gly-138, Glu-152, Asn-167, and Asn-225 each bind UDP-N-acetyl-alpha-D-glucosamine; these read LAAG, GT, and YGD. Asp-103 lines the Mg(2+) pocket. Asn-225 lines the Mg(2+) pocket. Residues 228–248 form a linker region; it reads LQLAALERYYQHKQAERLLLE. Residues 249-454 form an N-acetyltransferase region; the sequence is GVMLIDPARF…AGWQRPTKKK (206 aa). Residues Arg-331 and Lys-349 each coordinate UDP-N-acetyl-alpha-D-glucosamine. The active-site Proton acceptor is His-361. UDP-N-acetyl-alpha-D-glucosamine contacts are provided by Tyr-364 and Asn-375. Acetyl-CoA contacts are provided by residues Ala-378, 384–385, Ser-403, Ala-421, and Arg-438; that span reads NY.

It in the N-terminal section; belongs to the N-acetylglucosamine-1-phosphate uridyltransferase family. The protein in the C-terminal section; belongs to the transferase hexapeptide repeat family. In terms of assembly, homotrimer. The cofactor is Mg(2+).

Its subcellular location is the cytoplasm. The catalysed reaction is alpha-D-glucosamine 1-phosphate + acetyl-CoA = N-acetyl-alpha-D-glucosamine 1-phosphate + CoA + H(+). It catalyses the reaction N-acetyl-alpha-D-glucosamine 1-phosphate + UTP + H(+) = UDP-N-acetyl-alpha-D-glucosamine + diphosphate. The protein operates within nucleotide-sugar biosynthesis; UDP-N-acetyl-alpha-D-glucosamine biosynthesis; N-acetyl-alpha-D-glucosamine 1-phosphate from alpha-D-glucosamine 6-phosphate (route II): step 2/2. Its pathway is nucleotide-sugar biosynthesis; UDP-N-acetyl-alpha-D-glucosamine biosynthesis; UDP-N-acetyl-alpha-D-glucosamine from N-acetyl-alpha-D-glucosamine 1-phosphate: step 1/1. It participates in bacterial outer membrane biogenesis; LPS lipid A biosynthesis. Its function is as follows. Catalyzes the last two sequential reactions in the de novo biosynthetic pathway for UDP-N-acetylglucosamine (UDP-GlcNAc). The C-terminal domain catalyzes the transfer of acetyl group from acetyl coenzyme A to glucosamine-1-phosphate (GlcN-1-P) to produce N-acetylglucosamine-1-phosphate (GlcNAc-1-P), which is converted into UDP-GlcNAc by the transfer of uridine 5-monophosphate (from uridine 5-triphosphate), a reaction catalyzed by the N-terminal domain. This chain is Bifunctional protein GlmU, found in Mannheimia succiniciproducens (strain KCTC 0769BP / MBEL55E).